A 324-amino-acid chain; its full sequence is Glyoxylate/hydroxypyruvate reductase B (324 aa).

Catalysis depends on residues arginine 237 and glutamate 266. Histidine 285 (proton donor) is an active-site residue.

It belongs to the D-isomer specific 2-hydroxyacid dehydrogenase family. GhrB subfamily. Homodimer.

Its subcellular location is the cytoplasm. It carries out the reaction glycolate + NADP(+) = glyoxylate + NADPH + H(+). The catalysed reaction is (R)-glycerate + NAD(+) = 3-hydroxypyruvate + NADH + H(+). The enzyme catalyses (R)-glycerate + NADP(+) = 3-hydroxypyruvate + NADPH + H(+). In terms of biological role, catalyzes the NADPH-dependent reduction of glyoxylate and hydroxypyruvate into glycolate and glycerate, respectively. This is Glyoxylate/hydroxypyruvate reductase B from Escherichia coli (strain SMS-3-5 / SECEC).